The primary structure comprises 285 residues: Ribosomal RNA large subunit methyltransferase F (285 aa).

It belongs to the methyltransferase superfamily. METTL16/RlmF family.

Its subcellular location is the cytoplasm. The catalysed reaction is adenosine(1618) in 23S rRNA + S-adenosyl-L-methionine = N(6)-methyladenosine(1618) in 23S rRNA + S-adenosyl-L-homocysteine + H(+). Functionally, specifically methylates the adenine in position 1618 of 23S rRNA. In Christiangramia forsetii (strain DSM 17595 / CGMCC 1.15422 / KT0803) (Gramella forsetii), this protein is Ribosomal RNA large subunit methyltransferase F.